Consider the following 518-residue polypeptide: ETHYLENE INSENSITIVE 3-like 2 protein (518 aa).

A coiled-coil region spans residues 37–73 (DDLSSDEEMEIEELEKKIWRDKQRLKRLKEMAKNGLG). The disordered stretch occupies residues 450–518 (FNHPNDLYRP…GQELPTSWIQ (69 aa)). 2 stretches are compositionally biased toward polar residues: residues 475 to 484 (PSPSTLNQNL) and 500 to 518 (GTENNLHNQGQELPTSWIQ).

Belongs to the EIN3 family. Acts as a homodimer to bind the primary ethylene response element.

The protein localises to the nucleus. Its function is as follows. Probable transcription factor acting as a positive regulator in the ethylene response pathway. Could bind the primary ethylene response element present in the ETHYLENE-RESPONSE-FACTOR1 promoter. The chain is ETHYLENE INSENSITIVE 3-like 2 protein (EIL2) from Arabidopsis thaliana (Mouse-ear cress).